A 296-amino-acid polypeptide reads, in one-letter code: MSASGYKAGYISIVGRPNVGKSTLLNHLIKQKISITSRKAQTTRHRIHGILTDVQSQFIFVDTPGFQMRHRSQLNQVMNRVVLQSMQDVDVILFVLEAGRFGREDEQVLEQLPRNLPVILVINKIDLLPDKLQLLPFMQKMADLFDFADIVPVSALQNRQLSDLTEVIRHYLPENPPVFTEDEITDRSERFLAAELLREKVFRQIGEEVPYSVSVIIEQFAVEGNLRRIHACILVERENQKAIIIGKQGKKLKDMATQARKDMEVLFDGKVYLEIWVKVKSGWADDAIALKSMGYE.

One can recognise an Era-type G domain in the interval 7-174 (KAGYISIVGR…TEVIRHYLPE (168 aa)). A G1 region spans residues 15-22 (GRPNVGKS). 15–22 (GRPNVGKS) contacts GTP. A G2 region spans residues 41–45 (QTTRH). A G3 region spans residues 62–65 (DTPG). Residues 62–66 (DTPGF) and 123–126 (NKID) each bind GTP. The G4 stretch occupies residues 123 to 126 (NKID). Residues 153–155 (VSA) form a G5 region. Residues 205-281 (IGEEVPYSVS…YLEIWVKVKS (77 aa)) form the KH type-2 domain.

This sequence belongs to the TRAFAC class TrmE-Era-EngA-EngB-Septin-like GTPase superfamily. Era GTPase family. Monomer.

It localises to the cytoplasm. Its subcellular location is the cell inner membrane. An essential GTPase that binds both GDP and GTP, with rapid nucleotide exchange. Plays a role in 16S rRNA processing and 30S ribosomal subunit biogenesis and possibly also in cell cycle regulation and energy metabolism. This chain is GTPase Era, found in Nitrosomonas eutropha (strain DSM 101675 / C91 / Nm57).